A 123-amino-acid chain; its full sequence is Molluscan insulin-related peptide 1 (123 aa).

The N-terminal stretch at 1-31 is a signal peptide; sequence MAGVRLVFTKAFMVTVLLTLLLNIGVKPAEG. Position 32 is a pyrrolidone carboxylic acid (glutamine 32). Disulfide bonds link cysteine 48–cysteine 109, cysteine 60–cysteine 122, and cysteine 108–cysteine 113. A propeptide spanning residues 68–69 is cleaved from the precursor; that stretch reads MV. Glutamine 99 bears the Pyrrolidone carboxylic acid mark.

The protein belongs to the insulin family. In terms of assembly, heterodimer of a B chain and an A chain linked by two disulfide bonds. Expressed in the cerebral light-green cells which are giant neuroendocrines cells involved in the control of growth.

Its subcellular location is the cytoplasmic vesicle. The protein resides in the secretory vesicle. This chain is Molluscan insulin-related peptide 1, found in Lymnaea stagnalis (Great pond snail).